Reading from the N-terminus, the 375-residue chain is Stimulator of interferon genes protein 2 (375 aa).

The next 4 helical transmembrane spans lie at 30 to 50 (TATVTSAIVFVISGALLLLAV), 60 to 80 (IHFLVFTAALLTLSFVLGELV), 114 to 134 (AGSILVVAISSALTLCFVLYE), and 144 to 164 (YPILFFLNCLVVPQLSFLVGL). Residues Tyr-195, Arg-256, and Arg-262 each coordinate 2',3'-cGAMP.

This sequence belongs to the STING family.

The protein resides in the membrane. Its function is as follows. Facilitator of innate immune signaling that acts as a sensor of second messenger signals produced by cyclic GMP-AMP synthase-like receptors (cGLRs) and promotes the production of type I interferon. Innate immune response is triggered in response to nucleotides from viruses and bacteria delivered to the cytoplasm. Acts by binding cyclic dinucleotides: recognizes and binds 2'-3' linked cGAMP (2'-3'-cGAMP), a second messengers produced by cGLRs in response to nucleotides in the cytosol, such as double-stranded RNA (dsRNA). Upon binding to 2'-3'-cGAMP, oligomerizes and promotes the recruitment and subsequent activation of the transcription factor IRF3 to induce expression of type I interferon. The sequence is that of Stimulator of interferon genes protein 2 from Stylophora pistillata (Smooth cauliflower coral).